The sequence spans 205 residues: Outer-membrane lipoprotein carrier protein (205 aa).

The first 19 residues, 1 to 19, serve as a signal peptide directing secretion; sequence MKKIIICFIFVFSINVSFA.

It belongs to the LolA family. As to quaternary structure, monomer.

The protein localises to the periplasm. In terms of biological role, participates in the translocation of lipoproteins from the inner membrane to the outer membrane. Only forms a complex with a lipoprotein if the residue after the N-terminal Cys is not an aspartate (The Asp acts as a targeting signal to indicate that the lipoprotein should stay in the inner membrane). The sequence is that of Outer-membrane lipoprotein carrier protein from Francisella tularensis subsp. holarctica (strain LVS).